We begin with the raw amino-acid sequence, 36 residues long: uncharacterized protein (36 aa).

This is an uncharacterized protein from Enterobacteria phage T4 (Bacteriophage T4).